Consider the following 39-residue polypeptide: Photosystem II reaction center protein J (39 aa).

A helical transmembrane segment spans residues 7–27 (IPLWIVATVAGTGALVVVGLF).

It belongs to the PsbJ family. In terms of assembly, PSII is composed of 1 copy each of membrane proteins PsbA, PsbB, PsbC, PsbD, PsbE, PsbF, PsbH, PsbI, PsbJ, PsbK, PsbL, PsbM, PsbT, PsbX, PsbY, PsbZ, Psb30/Ycf12, peripheral proteins PsbO, CyanoQ (PsbQ), PsbU, PsbV and a large number of cofactors. It forms dimeric complexes.

Its subcellular location is the cellular thylakoid membrane. Its function is as follows. One of the components of the core complex of photosystem II (PSII). PSII is a light-driven water:plastoquinone oxidoreductase that uses light energy to abstract electrons from H(2)O, generating O(2) and a proton gradient subsequently used for ATP formation. It consists of a core antenna complex that captures photons, and an electron transfer chain that converts photonic excitation into a charge separation. The chain is Photosystem II reaction center protein J from Synechococcus sp. (strain ATCC 27144 / PCC 6301 / SAUG 1402/1) (Anacystis nidulans).